Here is a 236-residue protein sequence, read N- to C-terminus: Carboxymethylenebutenolidase (236 aa).

Catalysis depends on residues cysteine 123, aspartate 171, and histidine 202.

This sequence belongs to the dienelactone hydrolase family. Monomer.

It catalyses the reaction 2-(5-oxo-2,5-dihydrofuran-2-ylidene)acetate + H2O = 4-oxohex-2-enedioate + H(+). It participates in aromatic compound metabolism; 3-chlorocatechol degradation. Functionally, ring cleavage of cyclic ester dienelactone to produce maleylacetate. The chain is Carboxymethylenebutenolidase (clcD) from Pseudomonas knackmussii (strain DSM 6978 / CCUG 54928 / LMG 23759 / B13).